We begin with the raw amino-acid sequence, 477 residues long: Sulfate adenylyltransferase subunit 1 (477 aa).

In terms of domain architecture, tr-type G spans 22–239 (KDMLRFITCG…TVQISHDAPL (218 aa)). Residues 31 to 38 (GSVDDGKS) are G1. 31-38 (GSVDDGKS) is a binding site for GTP. Positions 89-93 (GITID) are G2. A G3 region spans residues 110–113 (DCPG). GTP contacts are provided by residues 110–114 (DCPGH) and 165–168 (NKMD). Residues 165–168 (NKMD) form a G4 region. Residues 202–204 (SAL) form a G5 region.

It belongs to the TRAFAC class translation factor GTPase superfamily. Classic translation factor GTPase family. CysN/NodQ subfamily. In terms of assembly, heterodimer composed of CysD, the smaller subunit, and CysN.

The enzyme catalyses sulfate + ATP + H(+) = adenosine 5'-phosphosulfate + diphosphate. The protein operates within sulfur metabolism; hydrogen sulfide biosynthesis; sulfite from sulfate: step 1/3. With CysD forms the ATP sulfurylase (ATPS) that catalyzes the adenylation of sulfate producing adenosine 5'-phosphosulfate (APS) and diphosphate, the first enzymatic step in sulfur assimilation pathway. APS synthesis involves the formation of a high-energy phosphoric-sulfuric acid anhydride bond driven by GTP hydrolysis by CysN coupled to ATP hydrolysis by CysD. The polypeptide is Sulfate adenylyltransferase subunit 1 (Chromobacterium violaceum (strain ATCC 12472 / DSM 30191 / JCM 1249 / CCUG 213 / NBRC 12614 / NCIMB 9131 / NCTC 9757 / MK)).